The chain runs to 552 residues: Mothers against decapentaplegic homolog 4 (552 aa).

Residues 1–322 are mediates interaction with ZBTB7A; sequence MDNMSITNTP…PISNHPAPEY (322 aa). Residues 18 to 142 form the MH1 domain; that stretch reads SIVHSLMCHR…YERVVSPGID (125 aa). Lys-37 carries the N6-acetyllysine modification. The required for interaction with TSC22D1 stretch occupies residues 44–69; that stretch reads VKKLKEKKDELDSLITAITTNGAHPS. Cys-71 lines the Zn(2+) pocket. Lys-113 is covalently cross-linked (Glycyl lysine isopeptide (Lys-Gly) (interchain with G-Cter in SUMO2)). Cys-115, Cys-127, and His-132 together coordinate Zn(2+). Disordered stretches follow at residues 168–194 and 236–256; these read GQPSLSTEGHSIQTIQHPPSNRASTET and GLLQIASGPQPGQQQNGFTGQ. Polar residues-rich tracts occupy residues 170-194 and 245-256; these read PSLSTEGHSIQTIQHPPSNRASTET and QPGQQQNGFTGQ. Residues 275-320 form an SAD region; sequence PYTPNLPHHQNGHLQHHPPMPPHPGHYWPVHNELAFQPPISNHPAP. The region spanning 323–552 is the MH2 domain; the sequence is WCSIAYFEMD…MPIADPQPLD (230 aa). Lys-428 and Lys-507 each carry N6-acetyllysine. Lys-519 participates in a covalent cross-link: Glycyl lysine isopeptide (Lys-Gly) (interchain with G-Cter in ubiquitin).

This sequence belongs to the dwarfin/SMAD family. In terms of assembly, monomer; in the absence of TGF-beta activation. Heterotrimer; on TGF-beta activation. Heterotrimer composed of two molecules of a C-terminally phosphorylated R-SMAD molecule, SMAD2 or SMAD3, and one molecule of SMAD4 to form the transcriptional active SMAD2/SMAD3-SMAD4 complex. Found in a ternary complex composed of SMAD4, STK11/LKB1 and STK11IP. Found in a complex with SMAD1 and YY1. Identified in a complex that contains at least ZNF451, SMAD2, SMAD3 and SMAD4. Interacts with ATF2, COPS5, DACH1, MSG1, SKI, STK11/LKB1, STK11IP and TRIM33. Associates with ZNF423 or ZNF521 in response to BMP2 leading to activate transcription of BMP target genes. Interacts with USP9X. Interacts (via the MH1 and MH2 domains) with RBPMS. Interacts with WWTR1 (via coiled-coil domain). Interacts with CITED1 and CITED2. Interacts with PDPK1 (via PH domain). Interacts with VPS39; this interaction affects heterodimer formation with SMAD3, but not with SMAD2, and leads to inhibition of SMAD3-dependent transcription activation. Interactions with VPS39 and SMAD2 may be mutually exclusive. Interacts (via MH2 domain) with ZNF451 (via N-terminal zinc-finger domains). Interacts with ZC3H3. Interacts weakly with ZNF8. Interacts with NUP93 and IPO7; translocates SMAD4 to the nucleus through the NPC upon BMP7 stimulation resulting in activation of SMAD4 signaling. Interacts with CREB3L1, the interaction takes place upon TGFB1 induction and SMAD4 acts as a CREB3L1 coactivator to induce the expression of genes involved in the assembly of collagen extracellular matrix. Interacts with DLX1. Interacts with ZBTB7A; the interaction is direct and stimulated by TGFB1. Interacts with CREBBP; the recruitment of this transcriptional coactivator is negatively regulated by ZBTB7A. Interacts with EP300; the interaction with this transcriptional coactivator is negatively regulated by ZBTB7A. Interacts with HDAC1. Interacts (via MH2 domain) with ZMIZ1 (via SP-RING-type domain); in the TGF-beta signaling pathway increases the activity of the SMAD3/SMAD4 transcriptional complex. Interacts (via N-terminus) with TSC22D1. Phosphorylated by PDPK1. In terms of processing, monoubiquitinated on Lys-519 by E3 ubiquitin-protein ligase TRIM33. Monoubiquitination hampers its ability to form a stable complex with activated SMAD2/3 resulting in inhibition of TGF-beta/BMP signaling cascade. Deubiquitination by USP9X restores its competence to mediate TGF-beta signaling.

The protein resides in the cytoplasm. It localises to the nucleus. Its function is as follows. In muscle physiology, plays a central role in the balance between atrophy and hypertrophy. When recruited by MSTN, promotes atrophy response via phosphorylated SMAD2/4. MSTN decrease causes SMAD4 release and subsequent recruitment by the BMP pathway to promote hypertrophy via phosphorylated SMAD1/5/8. Acts synergistically with SMAD1 and YY1 in bone morphogenetic protein (BMP)-mediated cardiac-specific gene expression. Binds to SMAD binding elements (SBEs) (5'-GTCT/AGAC-3') within BMP response element (BMPRE) of cardiac activating regions. Common SMAD (co-SMAD) is the coactivator and mediator of signal transduction by TGF-beta (transforming growth factor). Component of the heterotrimeric SMAD2/SMAD3-SMAD4 complex that forms in the nucleus and is required for the TGF-mediated signaling. Promotes binding of the SMAD2/SMAD4/FAST-1 complex to DNA and provides an activation function required for SMAD1 or SMAD2 to stimulate transcription. Component of the multimeric SMAD3/SMAD4/JUN/FOS complex which forms at the AP1 promoter site; required for synergistic transcriptional activity in response to TGF-beta. May act as a tumor suppressor. Positively regulates PDPK1 kinase activity by stimulating its dissociation from the 14-3-3 protein YWHAQ which acts as a negative regulator. This is Mothers against decapentaplegic homolog 4 (SMAD4) from Homo sapiens (Human).